The sequence spans 157 residues: 2-C-methyl-D-erythritol 2,4-cyclodiphosphate synthase (157 aa).

A divalent metal cation-binding residues include D8 and H10. 4-CDP-2-C-methyl-D-erythritol 2-phosphate is bound by residues 8-10 and 34-35; these read DVH and HS. H42 provides a ligand contact to a divalent metal cation. Residues 56 to 58, 61 to 65, 100 to 106, 132 to 135, F139, and R142 each bind 4-CDP-2-C-methyl-D-erythritol 2-phosphate; these read DIG, FPDTD, AQRPKMA, and TTTE.

This sequence belongs to the IspF family. Homotrimer. It depends on a divalent metal cation as a cofactor.

It catalyses the reaction 4-CDP-2-C-methyl-D-erythritol 2-phosphate = 2-C-methyl-D-erythritol 2,4-cyclic diphosphate + CMP. The protein operates within isoprenoid biosynthesis; isopentenyl diphosphate biosynthesis via DXP pathway; isopentenyl diphosphate from 1-deoxy-D-xylulose 5-phosphate: step 4/6. Functionally, involved in the biosynthesis of isopentenyl diphosphate (IPP) and dimethylallyl diphosphate (DMAPP), two major building blocks of isoprenoid compounds. Catalyzes the conversion of 4-diphosphocytidyl-2-C-methyl-D-erythritol 2-phosphate (CDP-ME2P) to 2-C-methyl-D-erythritol 2,4-cyclodiphosphate (ME-CPP) with a corresponding release of cytidine 5-monophosphate (CMP). This Geobacter sulfurreducens (strain ATCC 51573 / DSM 12127 / PCA) protein is 2-C-methyl-D-erythritol 2,4-cyclodiphosphate synthase.